A 229-amino-acid polypeptide reads, in one-letter code: Dephospho-CoA kinase domain-containing protein (229 aa).

The DPCK domain occupies 3-207 (LVGLTGGIAS…DCMQFLIIRA (205 aa)). Residue 8–15 (GGIASGKS) participates in ATP binding.

Belongs to the CoaE family.

The chain is Dephospho-CoA kinase domain-containing protein (dcakd) from Danio rerio (Zebrafish).